A 739-amino-acid polypeptide reads, in one-letter code: Malate synthase G (739 aa).

Polar residues predominate over residues 1–18 (MTEQELLSAQTADNAGTD). The segment at 1-23 (MTEQELLSAQTADNAGTDSTERV) is disordered. Acetyl-CoA-binding positions include Val135, 142 to 143 (RF), Ser292, and Arg329. The active-site Proton acceptor is the Arg356. Glyoxylate is bound by residues Arg356, Glu447, and 472–475 (GFLD). Residues Glu447 and Asp475 each coordinate Mg(2+). Residue Pro556 participates in acetyl-CoA binding. The residue at position 633 (Cys633) is a Cysteine sulfenic acid (-SOH). Residue Asp647 is the Proton donor of the active site.

This sequence belongs to the malate synthase family. GlcB subfamily. As to quaternary structure, monomer. Mg(2+) serves as cofactor.

It is found in the cytoplasm. It catalyses the reaction glyoxylate + acetyl-CoA + H2O = (S)-malate + CoA + H(+). It participates in carbohydrate metabolism; glyoxylate cycle; (S)-malate from isocitrate: step 2/2. With respect to regulation, inhibited by oxalate, glycolate and ATP. Its function is as follows. Involved in the glycolate utilization. Catalyzes the condensation and subsequent hydrolysis of acetyl-coenzyme A (acetyl-CoA) and glyoxylate to form malate and CoA. The polypeptide is Malate synthase G (Corynebacterium glutamicum (strain ATCC 13032 / DSM 20300 / JCM 1318 / BCRC 11384 / CCUG 27702 / LMG 3730 / NBRC 12168 / NCIMB 10025 / NRRL B-2784 / 534)).